Consider the following 675-residue polypeptide: Metal-nicotianamine transporter YSL3 (675 aa).

A run of 14 helical transmembrane segments spans residues 42–62 (ITFR…VIVM), 66–86 (LTTG…FVFL), 114–134 (CAVA…LLGL), 159–179 (GIGW…LALV), 219–239 (VFGF…QWFF), 280–300 (IVNI…WPLI), 325–345 (VFIS…KILF), 386–406 (IPLW…IIAI), 408–428 (IMFP…APSL), 450–470 (VALF…AGLV), 504–524 (VSQA…FFLF), 556–576 (FSAL…FAVA), 602–622 (FLVG…VFAW), and 630–650 (AGLM…LWIL).

Belongs to the YSL (TC 2.A.67.2) family. Expressed in leaves, anthers and pollen grains. Restricted to the vasculature.

The protein localises to the membrane. May be involved in the lateral transport of nicotianamine-chelated metals in the vasculature. This chain is Metal-nicotianamine transporter YSL3 (YSL3), found in Arabidopsis thaliana (Mouse-ear cress).